A 245-amino-acid polypeptide reads, in one-letter code: tRNA pseudouridine synthase A (245 aa).

The active-site Nucleophile is Asp-52. Tyr-111 is a binding site for substrate.

The protein belongs to the tRNA pseudouridine synthase TruA family. As to quaternary structure, homodimer.

The catalysed reaction is uridine(38/39/40) in tRNA = pseudouridine(38/39/40) in tRNA. Formation of pseudouridine at positions 38, 39 and 40 in the anticodon stem and loop of transfer RNAs. The polypeptide is tRNA pseudouridine synthase A (Ehrlichia chaffeensis (strain ATCC CRL-10679 / Arkansas)).